We begin with the raw amino-acid sequence, 363 residues long: UDP-N-acetylglucosamine--N-acetylmuramyl-(pentapeptide) pyrophosphoryl-undecaprenol N-acetylglucosamine transferase (363 aa).

UDP-N-acetyl-alpha-D-glucosamine contacts are provided by residues 21 to 23, asparagine 129, arginine 170, serine 196, and glutamine 290; that span reads TGG.

This sequence belongs to the glycosyltransferase 28 family. MurG subfamily.

The protein localises to the cell inner membrane. The catalysed reaction is di-trans,octa-cis-undecaprenyl diphospho-N-acetyl-alpha-D-muramoyl-L-alanyl-D-glutamyl-meso-2,6-diaminopimeloyl-D-alanyl-D-alanine + UDP-N-acetyl-alpha-D-glucosamine = di-trans,octa-cis-undecaprenyl diphospho-[N-acetyl-alpha-D-glucosaminyl-(1-&gt;4)]-N-acetyl-alpha-D-muramoyl-L-alanyl-D-glutamyl-meso-2,6-diaminopimeloyl-D-alanyl-D-alanine + UDP + H(+). It functions in the pathway cell wall biogenesis; peptidoglycan biosynthesis. Functionally, cell wall formation. Catalyzes the transfer of a GlcNAc subunit on undecaprenyl-pyrophosphoryl-MurNAc-pentapeptide (lipid intermediate I) to form undecaprenyl-pyrophosphoryl-MurNAc-(pentapeptide)GlcNAc (lipid intermediate II). The protein is UDP-N-acetylglucosamine--N-acetylmuramyl-(pentapeptide) pyrophosphoryl-undecaprenol N-acetylglucosamine transferase of Synechococcus sp. (strain ATCC 27144 / PCC 6301 / SAUG 1402/1) (Anacystis nidulans).